The primary structure comprises 363 residues: Probable methyltransferase-like protein 24 (363 aa).

Positions 1–38 (MGTAKPPGRGCGALPRWLLGAALLLGLRLCMELRHAGS) are cleaved as a signal peptide. The interval 37-62 (GSGPPGRRDLRGPPRTHLLPAPGPLR) is disordered.

The protein belongs to the methyltransferase superfamily.

The protein localises to the secreted. Probable methyltransferase. This is Probable methyltransferase-like protein 24 (Mettl24) from Rattus norvegicus (Rat).